Consider the following 126-residue polypeptide: MFPGGGKFNPRMMKQMQKMMKDFGMDAEDLKAVKVTIELEDTILVFEKPKVQVMDMLGNKTYSITGKAKKVAKAEEKIEDVEVKVEVTEEDVEMVSSQCGVSKEEAKKALEEANGDLAEAILKLGN.

One can recognise an NAC-A/B domain in the interval 10-77; that stretch reads PRMMKQMQKM…AKKVAKAEEK (68 aa).

The protein belongs to the NAC-alpha family. Homodimer. Interacts with the ribosome. Binds ribosomal RNA.

Its function is as follows. Contacts the emerging nascent chain on the ribosome. The protein is Nascent polypeptide-associated complex protein of Methanococcus maripaludis (strain C6 / ATCC BAA-1332).